Reading from the N-terminus, the 380-residue chain is Zinc metalloproteinase-like protein nas-21 (380 aa).

Residues methionine 1–glycine 24 form the signal peptide. Positions glutamine 46 to serine 234 constitute a Peptidase M12A domain. An N-linked (GlcNAc...) asparagine glycan is attached at asparagine 87. Intrachain disulfides connect cysteine 90/cysteine 233 and cysteine 110/cysteine 130. Residue glutamate 138 is part of the active site. Residues asparagine 253, asparagine 269, asparagine 283, and asparagine 304 are each glycosylated (N-linked (GlcNAc...) asparagine).

It is found in the secreted. Functionally, may lack metalloprotease activity. This chain is Zinc metalloproteinase-like protein nas-21 (nas-21), found in Caenorhabditis elegans.